An 84-amino-acid chain; its full sequence is Large ribosomal subunit protein bL27 (84 aa).

Belongs to the bacterial ribosomal protein bL27 family.

In Campylobacter lari (strain RM2100 / D67 / ATCC BAA-1060), this protein is Large ribosomal subunit protein bL27.